The sequence spans 344 residues: Endoplasmic reticulum junction formation protein lunapark-1 (344 aa).

Over 1-39 (MGNLFSRTKSPATELERVVLSIEDFKKRLQTISASNSST) the chain is Cytoplasmic. The chain crosses the membrane as a helical span at residues 40–60 (LYYYYMGVIIILSIAMAHTWL). Residues 61-68 (RFDDPTKT) lie on the Lumenal side of the membrane. A helical transmembrane segment spans residues 69-89 (YVACALVFGATVIVLTGRYII). The Cytoplasmic segment spans residues 90–344 (NCFFAWRTNR…ADETAVVEKS (255 aa)). Residues 116-140 (DLVKETLKFKEAKEILDRYEEKTEA) adopt a coiled-coil conformation. Disordered regions lie at residues 136-155 (EKTE…HQQK) and 171-192 (QKRV…IAFD). Positions 140–155 (AGNTPTENSKLIHQQK) are enriched in polar residues. The C4-type; plays a role in ER morphology zinc-finger motif lies at 239 to 264 (CSICHTHNGMSVPAEYPFISFRCFEC). Residues 275–344 (PHLPITRPPM…ADETAVVEKS (70 aa)) form a disordered region. A compositionally biased stretch (polar residues) spans 312 to 326 (PNPSTDLTPSASQHG). Residues 327–344 (SDSEPEKNADETAVVEKS) are compositionally biased toward basic and acidic residues.

This sequence belongs to the lunapark family.

It localises to the endoplasmic reticulum membrane. Functionally, plays a role in tubular endoplasmic reticulum network formation and maintenance. May be involved in central nervous system development. Has a presynaptic role in neurotransmission. Likely to operate in synaptogenesis by regulating vesicular transport or localization. Required for correct localization of rab-3 and snb-1. The sequence is that of Endoplasmic reticulum junction formation protein lunapark-1 from Caenorhabditis briggsae.